The sequence spans 206 residues: MARGKFITFEGIDGAGKTTHLSWFRERLEQKVASTGRSVVMTREPGGTPLGEQIREIVLHQKMDLETEALLMFALRRQHLAEVIEPALARGDWVLSDRFTDATFAYQGGGRGLPRDKLETLERWVQGGFQPDLTVLFDLAPEIANERRSAARDPDRFESESVAFFNRTRAEYLRRAEEAPYRFAIIDSAQSIVQIQRKLEELIAIL.

Residue 11-18 participates in ATP binding; that stretch reads GIDGAGKT.

It belongs to the thymidylate kinase family.

It catalyses the reaction dTMP + ATP = dTDP + ADP. Its function is as follows. Phosphorylation of dTMP to form dTDP in both de novo and salvage pathways of dTTP synthesis. The protein is Thymidylate kinase of Paraburkholderia phytofirmans (strain DSM 17436 / LMG 22146 / PsJN) (Burkholderia phytofirmans).